The primary structure comprises 615 residues: Leucine aminopeptidase 2-1 (615 aa).

Substrate is bound by residues 137-139 (QCQ) and 261-266 (PYGGME). Residue His-290 coordinates Zn(2+). The Proton acceptor role is filled by Glu-291. Residues His-294 and Glu-313 each coordinate Zn(2+). The active-site Proton donor is Tyr-380.

The protein belongs to the peptidase M1 family. The cofactor is Zn(2+).

It is found in the cytoplasm. Its subcellular location is the nucleus. The enzyme catalyses an epoxide + H2O = an ethanediol. Its function is as follows. Aminopeptidase that preferentially cleaves di- and tripeptides. Also has low epoxide hydrolase activity (in vitro). Can hydrolyze the epoxide leukotriene LTA(4) but it forms preferentially 5,6-dihydroxy-7,9,11,14-eicosatetraenoic acid rather than the cytokine leukotriene B(4) as the product compared to the homologous mammalian enzyme (in vitro). The sequence is that of Leucine aminopeptidase 2-1 from Meyerozyma guilliermondii (strain ATCC 6260 / CBS 566 / DSM 6381 / JCM 1539 / NBRC 10279 / NRRL Y-324) (Yeast).